Here is a 571-residue protein sequence, read N- to C-terminus: MALPRPSEAVPQDKVCYPPESSPQNLAAYYTPFPSYGHYRNSLATVEEDFQPFRQLEAAASAAPAMPPFPFRMAPPLLSPGLGLQREPLYDLPWYSKLPPWYPIPHVPREVPPFLSSSHEYAGASSEDLGHQIIGGDNESGPCCGPDTLIPPPPADASLLPEGLRTSQLLPCSPSKQSEDGPKPSNQEGKSPARFQFTEEDLHFVLYGVTPSLEHPASLHHAISGLLVPPDSSGSDSLPQTLDKDSLQLPEGLCLMQTVFGEVPHFGVFCSSFIAKGVRFGPFQGKVVNASEVKTYGDNSVMWEIFEDGHLSHFIDGKGGTGNWMSYVNCARFPKEQNLVAVQCQGHIFYESCKEIHQNQELLVWYGDCYEKFLDIPVSLQVTEPGKQPSGPSEESAEGYRCERCGKVFTYKYYRDKHLKYTPCVDKGDRKFPCSLCKRSFEKRDRLRIHILHVHEKHRPHKCSTCGKCFSQSSSLNKHMRVHSGDRPYQCVYCTKRFTASSILRTHIRQHSGEKPFKCKYCGKSFASHAAHDSHVRRSHKEDDGCSCSICGKIFSDQETFYSHMKFHEDY.

Phosphoserine is present on S79. Positions 129 to 191 (LGHQIIGGDN…PKPSNQEGKS (63 aa)) are disordered. Residues 165–176 (RTSQLLPCSPSK) show a composition bias toward polar residues. The segment at 194–384 (RFQFTEEDLH…DIPVSLQVTE (191 aa)) is interaction with CBFA2T2. One can recognise an SET domain in the interval 251–367 (EGLCLMQTVF…QNQELLVWYG (117 aa)). A C2H2-type 1; atypical zinc finger spans residues 400 to 424 (YRCERCGKVFTYKYYRDKHLKYTPC). C2H2-type zinc fingers lie at residues 432–455 (FPCS…LHVH), 461–483 (HKCS…MRVH), 489–511 (YQCV…IRQH), 517–540 (FKCK…RRSH), and 546–568 (CSCS…MKFH).

This sequence belongs to the class V-like SAM-binding methyltransferase superfamily. As to quaternary structure, interacts with CBFA2T2. Expressed in embryonic stem cells. Tends to be overexpressed in breast cancer (at protein level).

It is found in the nucleus. Its function is as follows. Transcription factor that has both positive and negative roles on transcription. Required for the maintenance of embryonic stem cell identity and the reacquisition of pluripotency in somatic cells. May play an essential role in germ cell development at 2 levels: the reacquisition of potential pluripotency, including SOX2 up-regulation, and successful epigenetic reprogramming, characterized by EHMT1 repression. Its association with CBFA2T2 is required for the functions in pluripotency and germ cell formation. Directly up-regulates the expression of pluripotency gene POU5F1 through its proximal enhancer. Binds to the DNA consensus sequence 5'-GGTC[TC]CTAA-3'. The sequence is that of PR domain zinc finger protein 14 (PRDM14) from Homo sapiens (Human).